A 189-amino-acid polypeptide reads, in one-letter code: Phosphoheptose isomerase (189 aa).

The 156-residue stretch at Ala-34–His-189 folds into the SIS domain. Asn-49 to Gly-51 provides a ligand contact to substrate. Residues His-58 and Glu-62 each contribute to the Zn(2+) site. Residues Glu-62, Asn-91–Asp-92, Ser-117–Ser-119, Ser-122, and Gln-169 each bind substrate. Gln-169 and His-177 together coordinate Zn(2+).

This sequence belongs to the SIS family. GmhA subfamily. In terms of assembly, homotetramer. Zn(2+) is required as a cofactor.

The protein localises to the cytoplasm. It carries out the reaction 2 D-sedoheptulose 7-phosphate = D-glycero-alpha-D-manno-heptose 7-phosphate + D-glycero-beta-D-manno-heptose 7-phosphate. It participates in carbohydrate biosynthesis; D-glycero-D-manno-heptose 7-phosphate biosynthesis; D-glycero-alpha-D-manno-heptose 7-phosphate and D-glycero-beta-D-manno-heptose 7-phosphate from sedoheptulose 7-phosphate: step 1/1. In terms of biological role, catalyzes the isomerization of sedoheptulose 7-phosphate in D-glycero-D-manno-heptose 7-phosphate. This chain is Phosphoheptose isomerase, found in Aliarcobacter butzleri (strain RM4018) (Arcobacter butzleri).